The chain runs to 357 residues: Phosphoserine aminotransferase (357 aa).

Position 41 (Arg-41) interacts with L-glutamate. Pyridoxal 5'-phosphate is bound by residues 75–76, Trp-100, Thr-150, Asp-170, and Gln-193; that span reads GT. An N6-(pyridoxal phosphate)lysine modification is found at Lys-194. Residue 234-235 coordinates pyridoxal 5'-phosphate; it reads NT.

This sequence belongs to the class-V pyridoxal-phosphate-dependent aminotransferase family. SerC subfamily. In terms of assembly, homodimer. The cofactor is pyridoxal 5'-phosphate.

The protein localises to the cytoplasm. It carries out the reaction O-phospho-L-serine + 2-oxoglutarate = 3-phosphooxypyruvate + L-glutamate. It catalyses the reaction 4-(phosphooxy)-L-threonine + 2-oxoglutarate = (R)-3-hydroxy-2-oxo-4-phosphooxybutanoate + L-glutamate. The protein operates within amino-acid biosynthesis; L-serine biosynthesis; L-serine from 3-phospho-D-glycerate: step 2/3. Its function is as follows. Catalyzes the reversible conversion of 3-phosphohydroxypyruvate to phosphoserine and of 3-hydroxy-2-oxo-4-phosphonooxybutanoate to phosphohydroxythreonine. This Lactiplantibacillus plantarum (strain ATCC BAA-793 / NCIMB 8826 / WCFS1) (Lactobacillus plantarum) protein is Phosphoserine aminotransferase.